We begin with the raw amino-acid sequence, 750 residues long: Photosystem I P700 chlorophyll a apoprotein A1 (750 aa).

Transmembrane regions (helical) follow at residues V70–A93, L156–H179, L195–L219, I291–Y309, W346–Y369, L385–V411, A433–H455, and F531–L549. Residues C573 and C582 each coordinate [4Fe-4S] cluster. 2 helical membrane-spanning segments follow: residues H589–W610 and L664–F686. A chlorophyll a'-binding site is contributed by H675. Residues M683 and Y691 each coordinate chlorophyll a. W692 contacts phylloquinone. A helical transmembrane segment spans residues A724–A744.

Belongs to the PsaA/PsaB family. In terms of assembly, the PsaA/B heterodimer binds the P700 chlorophyll special pair and subsequent electron acceptors. PSI consists of a core antenna complex that captures photons, and an electron transfer chain that converts photonic excitation into a charge separation. The eukaryotic PSI reaction center is composed of at least 11 subunits. P700 is a chlorophyll a/chlorophyll a' dimer, A0 is one or more chlorophyll a, A1 is one or both phylloquinones and FX is a shared 4Fe-4S iron-sulfur center. serves as cofactor.

Its subcellular location is the plastid. The protein localises to the chloroplast thylakoid membrane. The catalysed reaction is reduced [plastocyanin] + hnu + oxidized [2Fe-2S]-[ferredoxin] = oxidized [plastocyanin] + reduced [2Fe-2S]-[ferredoxin]. Functionally, psaA and PsaB bind P700, the primary electron donor of photosystem I (PSI), as well as the electron acceptors A0, A1 and FX. PSI is a plastocyanin-ferredoxin oxidoreductase, converting photonic excitation into a charge separation, which transfers an electron from the donor P700 chlorophyll pair to the spectroscopically characterized acceptors A0, A1, FX, FA and FB in turn. Oxidized P700 is reduced on the lumenal side of the thylakoid membrane by plastocyanin. The polypeptide is Photosystem I P700 chlorophyll a apoprotein A1 (Crucihimalaya wallichii (Rock-cress)).